A 336-amino-acid chain; its full sequence is Sex determination protein tasselseed-2 (336 aa).

59-83 (IVTGGARGIGEAIVRLFAKHGARVV) provides a ligand contact to NAD(+). Ser-194 contacts substrate. Residue Tyr-207 is the Proton acceptor of the active site.

Belongs to the short-chain dehydrogenases/reductases (SDR) family.

Its function is as follows. Required for stage-specific floral organ abortion. The polypeptide is Sex determination protein tasselseed-2 (TS2) (Zea mays (Maize)).